Consider the following 888-residue polypeptide: Dilute domain-containing protein YPR089W (888 aa).

The Dilute domain occupies 360 to 745 (DIVLQSYWLS…KKFLNNKIKD (386 aa)). 3 disordered regions span residues 462–504 (KEQQ…NNSS), 805–827 (KQRQNEPQISRTNSGTSDFTGDE), and 865–888 (LNIPSSTAQRPAWSNNDDMEQNPW). Composition is skewed to polar residues over residues 809–823 (NEPQISRTNSGTSDF) and 867–880 (IPSSTAQRPAWSNN).

The protein localises to the golgi apparatus. This Saccharomyces cerevisiae (strain ATCC 204508 / S288c) (Baker's yeast) protein is Dilute domain-containing protein YPR089W.